A 134-amino-acid polypeptide reads, in one-letter code: Ribosome-binding factor A (134 aa).

Belongs to the RbfA family. As to quaternary structure, monomer. Binds 30S ribosomal subunits, but not 50S ribosomal subunits or 70S ribosomes.

It is found in the cytoplasm. Functionally, one of several proteins that assist in the late maturation steps of the functional core of the 30S ribosomal subunit. Associates with free 30S ribosomal subunits (but not with 30S subunits that are part of 70S ribosomes or polysomes). Required for efficient processing of 16S rRNA. May interact with the 5'-terminal helix region of 16S rRNA. This is Ribosome-binding factor A from Sinorhizobium medicae (strain WSM419) (Ensifer medicae).